The chain runs to 491 residues: Monothiol glutaredoxin-S11 (491 aa).

3 Glutaredoxin domains span residues 151 to 253 (NKRL…NIPL), 287 to 389 (KERL…GIVA), and 394 to 491 (EDRL…TLSE). Glutathione is bound at residue K411. C419 serves as a coordination point for [2Fe-2S] cluster. Glutathione-binding positions include R448, F460, and 473 to 474 (CD).

Belongs to the glutaredoxin family. CGFS subfamily.

The protein resides in the cytoplasm. Functionally, may only reduce GSH-thiol disulfides, but not protein disulfides. The chain is Monothiol glutaredoxin-S11 (GRXS11) from Oryza sativa subsp. japonica (Rice).